The chain runs to 146 residues: Holo-[acyl-carrier-protein] synthase (146 aa).

Mg(2+) is bound by residues D9 and E58.

Belongs to the P-Pant transferase superfamily. AcpS family. Mg(2+) is required as a cofactor.

The protein localises to the cytoplasm. The enzyme catalyses apo-[ACP] + CoA = holo-[ACP] + adenosine 3',5'-bisphosphate + H(+). Its function is as follows. Transfers the 4'-phosphopantetheine moiety from coenzyme A to a Ser of acyl-carrier-protein. In Baumannia cicadellinicola subsp. Homalodisca coagulata, this protein is Holo-[acyl-carrier-protein] synthase.